The following is a 165-amino-acid chain: Endoribonuclease YbeY (165 aa).

Residues histidine 126, histidine 130, and histidine 136 each contribute to the Zn(2+) site.

This sequence belongs to the endoribonuclease YbeY family. Zn(2+) serves as cofactor.

Its subcellular location is the cytoplasm. Single strand-specific metallo-endoribonuclease involved in late-stage 70S ribosome quality control and in maturation of the 3' terminus of the 16S rRNA. In Ruegeria pomeroyi (strain ATCC 700808 / DSM 15171 / DSS-3) (Silicibacter pomeroyi), this protein is Endoribonuclease YbeY.